Here is a 460-residue protein sequence, read N- to C-terminus: Argininosuccinate lyase (460 aa).

Belongs to the lyase 1 family. Argininosuccinate lyase subfamily.

The protein localises to the cytoplasm. The catalysed reaction is 2-(N(omega)-L-arginino)succinate = fumarate + L-arginine. Its pathway is amino-acid biosynthesis; L-arginine biosynthesis; L-arginine from L-ornithine and carbamoyl phosphate: step 3/3. The protein is Argininosuccinate lyase of Pelotomaculum thermopropionicum (strain DSM 13744 / JCM 10971 / SI).